The primary structure comprises 152 residues: Ribonuclease pancreatic gamma-type (152 aa).

An N-terminal signal peptide occupies residues 1 to 25 (MGLEKSLFLFSLLVLVLGWVQPSLG). Residues Lys-35 and Arg-38 each contribute to the substrate site. His-40 (proton acceptor) is an active-site residue. 4 disulfides stabilise this stretch: Cys-54–Cys-112, Cys-68–Cys-123, Cys-86–Cys-138, and Cys-93–Cys-100. Substrate-binding positions include 69-73 (KSMNT), Lys-94, and Arg-113. His-147 serves as the catalytic Proton donor.

It belongs to the pancreatic ribonuclease family. Monomer.

Its subcellular location is the secreted. It carries out the reaction an [RNA] containing cytidine + H2O = an [RNA]-3'-cytidine-3'-phosphate + a 5'-hydroxy-ribonucleotide-3'-[RNA].. The catalysed reaction is an [RNA] containing uridine + H2O = an [RNA]-3'-uridine-3'-phosphate + a 5'-hydroxy-ribonucleotide-3'-[RNA].. Functionally, endonuclease that catalyzes the cleavage of RNA on the 3' side of pyrimidine nucleotides. Acts on single-stranded and double-stranded RNA. The polypeptide is Ribonuclease pancreatic gamma-type (Rattus norvegicus (Rat)).